Consider the following 248-residue polypeptide: Ribosomal RNA small subunit methyltransferase G (248 aa).

S-adenosyl-L-methionine is bound by residues glycine 85, phenylalanine 90, 137–138 (IE), and arginine 156.

Belongs to the methyltransferase superfamily. RNA methyltransferase RsmG family.

It localises to the cytoplasm. Specifically methylates the N7 position of a guanine in 16S rRNA. This chain is Ribosomal RNA small subunit methyltransferase G, found in Parasynechococcus marenigrum (strain WH8102).